A 335-amino-acid chain; its full sequence is Luciferase-like monooxygenase (335 aa).

To bacterial alkanal monooxygenase alpha and beta chains.

In Escherichia coli O6:H1 (strain CFT073 / ATCC 700928 / UPEC), this protein is Luciferase-like monooxygenase (yhbW).